Consider the following 315-residue polypeptide: Protoheme IX farnesyltransferase (315 aa).

The next 9 helical transmembrane spans lie at 34–54, 55–75, 105–125, 127–147, 155–175, 177–197, 226–246, 251–271, and 294–314; these read VISL…GPIN, PLIA…AGAI, ALGF…LAAN, LAAF…TMWL, IVIG…ATTG, LGVL…PHFW, WQIL…SFLH, LYTG…VGVL, and YSLA…FLIM.

Belongs to the UbiA prenyltransferase family. Protoheme IX farnesyltransferase subfamily.

It localises to the cell inner membrane. It carries out the reaction heme b + (2E,6E)-farnesyl diphosphate + H2O = Fe(II)-heme o + diphosphate. Its pathway is porphyrin-containing compound metabolism; heme O biosynthesis; heme O from protoheme: step 1/1. In terms of biological role, converts heme B (protoheme IX) to heme O by substitution of the vinyl group on carbon 2 of heme B porphyrin ring with a hydroxyethyl farnesyl side group. This is Protoheme IX farnesyltransferase from Gluconacetobacter diazotrophicus (strain ATCC 49037 / DSM 5601 / CCUG 37298 / CIP 103539 / LMG 7603 / PAl5).